Consider the following 487-residue polypeptide: Glutamyl-tRNA(Gln) amidotransferase subunit A (487 aa).

Active-site charge relay system residues include Lys-74 and Ser-149. Ser-173 functions as the Acyl-ester intermediate in the catalytic mechanism.

Belongs to the amidase family. GatA subfamily. As to quaternary structure, heterotrimer of A, B and C subunits.

The enzyme catalyses L-glutamyl-tRNA(Gln) + L-glutamine + ATP + H2O = L-glutaminyl-tRNA(Gln) + L-glutamate + ADP + phosphate + H(+). Its function is as follows. Allows the formation of correctly charged Gln-tRNA(Gln) through the transamidation of misacylated Glu-tRNA(Gln) in organisms which lack glutaminyl-tRNA synthetase. The reaction takes place in the presence of glutamine and ATP through an activated gamma-phospho-Glu-tRNA(Gln). The polypeptide is Glutamyl-tRNA(Gln) amidotransferase subunit A (Synechococcus sp. (strain WH7803)).